Here is a 490-residue protein sequence, read N- to C-terminus: Betaine aldehyde dehydrogenase (490 aa).

3 residues coordinate K(+): T26, I27, and D93. Residue 150-152 (GAW) participates in NAD(+) binding. K162 (charge relay system) is an active-site residue. 176 to 179 (KPSE) provides a ligand contact to NAD(+). Position 180 (V180) interacts with K(+). 230–233 (GVAS) lines the NAD(+) pocket. Residue L246 participates in K(+) binding. The active-site Proton acceptor is the E252. The NAD(+) site is built by G254, C286, and E387. The active-site Nucleophile is C286. C286 is subject to Cysteine sulfenic acid (-SOH). 2 residues coordinate K(+): K457 and G460. The active-site Charge relay system is E464.

Belongs to the aldehyde dehydrogenase family. As to quaternary structure, dimer of dimers. K(+) is required as a cofactor.

The enzyme catalyses betaine aldehyde + NAD(+) + H2O = glycine betaine + NADH + 2 H(+). The protein operates within amine and polyamine biosynthesis; betaine biosynthesis via choline pathway; betaine from betaine aldehyde: step 1/1. Involved in the biosynthesis of the osmoprotectant glycine betaine. Catalyzes the irreversible oxidation of betaine aldehyde to the corresponding acid. This is Betaine aldehyde dehydrogenase from Escherichia coli O8 (strain IAI1).